Here is a 384-residue protein sequence, read N- to C-terminus: Ceramide synthase 6 (384 aa).

The Lumenal portion of the chain corresponds to 1–34 (MAGILAWFWNERFWLPHNVTWADLKNTEEATFPQ). Asn18 is a glycosylation site (N-linked (GlcNAc...) asparagine). The chain crosses the membrane as a helical span at residues 35–55 (AEDLYLAFPLAFCIFMVRLIF). A homeobox-like region spans residues 66 to 127 (ALNIQANGPQ…RQRRNQEKPS (62 aa)). One can recognise a TLC domain in the interval 130–331 (TRFCESMWRF…IVKIACKTVS (202 aa)). 4 helical membrane-spanning segments follow: residues 174 to 194 (LTADLHYYYILELSFYWSLMV), 205 to 225 (FGIMFLHHLATIFLITFSYVN), 263 to 283 (LFVMFAVVFITTRLGIFPLWV), and 303 to 323 (VFNLLLLLLQGLNCFWSYLIV). Topologically, residues 324–384 (KIACKTVSKG…LLTGPCSVDD (61 aa)) are cytoplasmic. The disordered stretch occupies residues 335–384 (VSKDDRSDIESSSDDEDSEPPGKKPHSSTTTNGTSGTNGYLLTGPCSVDD). A compositionally biased stretch (low complexity) spans 361–373 (SSTTTNGTSGTNG).

In terms of processing, N-glycosylated. Glycosylation on Asn-18 is not necessary for function. Post-translationally, acetylated. Deacetylation by SIRT3 increases enzyme activity and promotes mitochondrial ceramide accumulation. Phosphorylated at the C-terminus by CK2. Broadly expressed, with highest levels in kidney and brain (at protein level).

It is found in the endoplasmic reticulum membrane. The enzyme catalyses a sphingoid base + hexadecanoyl-CoA = an N-hexadecanoyl-sphingoid base + CoA + H(+). The catalysed reaction is sphinganine + hexadecanoyl-CoA = N-hexadecanoylsphinganine + CoA + H(+). It carries out the reaction hexadecasphinganine + hexadecanoyl-CoA = N-hexadecanoylhexadecasphinganine + CoA + H(+). It catalyses the reaction sphing-4-enine + hexadecanoyl-CoA = N-hexadecanoylsphing-4-enine + CoA + H(+). The enzyme catalyses sphinganine + tetradecanoyl-CoA = N-(tetradecanoyl)-sphinganine + CoA + H(+). The catalysed reaction is sphinganine + octadecanoyl-CoA = N-(octadecanoyl)-sphinganine + CoA + H(+). The protein operates within lipid metabolism; sphingolipid metabolism. Functionally, ceramide synthase that catalyzes the transfer of the acyl chain from acyl-CoA to a sphingoid base, with high selectivity toward palmitoyl-CoA (hexadecanoyl-CoA; C16:0-CoA). Can use other acyl donors, but with less efficiency. N-acylates sphinganine and sphingosine bases to form dihydroceramides and ceramides in de novo synthesis and salvage pathways, respectively. Ceramides generated by CERS6 play a role in inflammatory response. Acts as a regulator of metabolism and hepatic lipid accumulation. Under high fat diet, palmitoyl- (C16:0-) ceramides generated by CERS6 specifically bind the mitochondrial fission factor MFF, thereby promoting mitochondrial fragmentation and contributing to the development of obesity. The chain is Ceramide synthase 6 from Mus musculus (Mouse).